The primary structure comprises 258 residues: Acyl-[acyl-carrier-protein]--UDP-N-acetylglucosamine O-acyltransferase (258 aa).

This sequence belongs to the transferase hexapeptide repeat family. LpxA subfamily. Homotrimer.

The protein resides in the cytoplasm. It catalyses the reaction a (3R)-hydroxyacyl-[ACP] + UDP-N-acetyl-alpha-D-glucosamine = a UDP-3-O-[(3R)-3-hydroxyacyl]-N-acetyl-alpha-D-glucosamine + holo-[ACP]. Its pathway is glycolipid biosynthesis; lipid IV(A) biosynthesis; lipid IV(A) from (3R)-3-hydroxytetradecanoyl-[acyl-carrier-protein] and UDP-N-acetyl-alpha-D-glucosamine: step 1/6. Involved in the biosynthesis of lipid A, a phosphorylated glycolipid that anchors the lipopolysaccharide to the outer membrane of the cell. The polypeptide is Acyl-[acyl-carrier-protein]--UDP-N-acetylglucosamine O-acyltransferase (Pseudomonas putida (strain W619)).